The following is a 156-amino-acid chain: Small ribosomal subunit protein uS7 (156 aa).

The protein belongs to the universal ribosomal protein uS7 family. Part of the 30S ribosomal subunit. Contacts proteins S9 and S11.

Functionally, one of the primary rRNA binding proteins, it binds directly to 16S rRNA where it nucleates assembly of the head domain of the 30S subunit. Is located at the subunit interface close to the decoding center, probably blocks exit of the E-site tRNA. The sequence is that of Small ribosomal subunit protein uS7 from Thiomonas delicata (Thiomonas cuprina).